The sequence spans 500 residues: RASPPSESRAPLRAPQRSATRQHQARQGPRRMCNGGRGPPYWTAGVTSAPARQTPLFSGRPSGGLSDPNEVAAVILGGGTGTQLFPLTSTRATPAVPIGGCYRLIDIPMSNCFNSGINKIFVMTQFNSASLNRHIHRTYLGGGINFTDGSVEVLAATQMPGEAAGWFRGTADAWRKIIWVLEDYYKNKSIEHILILSGDQLYRMDYMELVQKHVDDNADITLSCAPVGESRASEYGLVKFDSSGRVVQFSEQPKGDDLEAMKVDTSFLNFAIDDPAKYPYIASMGVYVFKRDVLLNLLKSRYAELHDFGSEILPRALHDHNVQAYVFTDYWEDIGTIRSFFDANRALCEQPPKFEFYDPKTPFFTSPRYLPPTKSDKCRIKEAIILHGCFLRECKIEHTAFSRLNSGSELKNAMMMGADSYETEDEMSRLMSEGKVPIGVGENTKISNCIIDMNARIGRDVVISNKEGVQEADRPEEGYYIRSGIVVIQKNATIKDGTVV.

A chloroplast-targeting transit peptide spans 1–33; it reads RASPPSESRAPLRAPQRSATRQHQARQGPRRMC. The tract at residues 1-47 is disordered; that stretch reads RASPPSESRAPLRAPQRSATRQHQARQGPRRMCNGGRGPPYWTAGVT.

The protein belongs to the bacterial/plant glucose-1-phosphate adenylyltransferase family. Heterotetramer.

It localises to the plastid. The protein localises to the chloroplast. It is found in the amyloplast. The catalysed reaction is alpha-D-glucose 1-phosphate + ATP + H(+) = ADP-alpha-D-glucose + diphosphate. Its pathway is glycan biosynthesis; starch biosynthesis. Insensitive to 3'phosphoglycerate and orthophosphate. Its function is as follows. This protein plays a role in synthesis of starch. It catalyzes the synthesis of the activated glycosyl donor, ADP-glucose from Glc-1-P and ATP. The protein is Glucose-1-phosphate adenylyltransferase large subunit, chloroplastic/amyloplastic (AGA.7) of Triticum aestivum (Wheat).